Here is a 102-residue protein sequence, read N- to C-terminus: Probable endoribonuclease MazF2 (102 aa).

This sequence belongs to the PemK/MazF family. In terms of assembly, forms a complex with cognate antitoxin MazE2.

Functionally, toxic component of a type II toxin-antitoxin (TA) system. Acts as an endoribonuclease. Neutralized by coexpression with cognate antitoxin MazE2. The chain is Probable endoribonuclease MazF2 (mazF2) from Mycobacterium tuberculosis (strain CDC 1551 / Oshkosh).